The primary structure comprises 299 residues: Virginiamycin B lyase (299 aa).

Substrate is bound at residue His229. Glu269 contributes to the Mg(2+) binding site. His271 acts as the Proton acceptor in catalysis. Residue Glu286 participates in Mg(2+) binding.

The protein belongs to the Vgb family. As to quaternary structure, monomer. Mg(2+) is required as a cofactor.

In terms of biological role, inactivates the type B streptogramin antibiotics by linearizing the lactone ring at the ester linkage, generating a free phenylglycine carboxylate and converting the threonyl moiety into 2-amino-butenoic acid. The polypeptide is Virginiamycin B lyase (Bordetella parapertussis (strain 12822 / ATCC BAA-587 / NCTC 13253)).